Consider the following 176-residue polypeptide: ATP synthase subunit delta (176 aa).

It belongs to the ATPase delta chain family. F-type ATPases have 2 components, F(1) - the catalytic core - and F(0) - the membrane proton channel. F(1) has five subunits: alpha(3), beta(3), gamma(1), delta(1), epsilon(1). F(0) has three main subunits: a(1), b(2) and c(10-14). The alpha and beta chains form an alternating ring which encloses part of the gamma chain. F(1) is attached to F(0) by a central stalk formed by the gamma and epsilon chains, while a peripheral stalk is formed by the delta and b chains.

It localises to the cell inner membrane. In terms of biological role, f(1)F(0) ATP synthase produces ATP from ADP in the presence of a proton or sodium gradient. F-type ATPases consist of two structural domains, F(1) containing the extramembraneous catalytic core and F(0) containing the membrane proton channel, linked together by a central stalk and a peripheral stalk. During catalysis, ATP synthesis in the catalytic domain of F(1) is coupled via a rotary mechanism of the central stalk subunits to proton translocation. Its function is as follows. This protein is part of the stalk that links CF(0) to CF(1). It either transmits conformational changes from CF(0) to CF(1) or is implicated in proton conduction. The protein is ATP synthase subunit delta of Aliarcobacter butzleri (strain RM4018) (Arcobacter butzleri).